A 399-amino-acid polypeptide reads, in one-letter code: Organelle RRM domain-containing protein 1, chloroplastic (399 aa).

The N-terminal 52 residues, 1–52, are a transit peptide targeting the chloroplast; the sequence is MDAARASLLLAGGLAVSTSTSAVATAAQTVSIPHLSPHTRRRRQRRFLRLAS. One can recognise an RRM domain in the interval 295–373; it reads KRLFVTGLSF…WMIVVDVAKH (79 aa). Residues 377–399 form a disordered region; it reads DRQPPYSASGRSNQVLRSRYHTG.

It localises to the plastid. Its subcellular location is the chloroplast. In terms of biological role, involved in C-to-U editing of chloroplastic RNA. Functions as major chloroplastic editing factor. Controls a majority of the chloroplastic editing sites. The protein is Organelle RRM domain-containing protein 1, chloroplastic of Oryza sativa subsp. japonica (Rice).